Reading from the N-terminus, the 228-residue chain is L-ribulose-5-phosphate 4-epimerase UlaF (228 aa).

Substrate contacts are provided by residues G26–N27, S43–G44, and S72–S73. Zn(2+)-binding residues include D74, H93, and H95. The active-site Proton donor/acceptor is the D118. H167 is a binding site for Zn(2+). Y225 functions as the Proton donor/acceptor in the catalytic mechanism.

The protein belongs to the aldolase class II family. AraD/FucA subfamily. Zn(2+) is required as a cofactor.

It carries out the reaction L-ribulose 5-phosphate = D-xylulose 5-phosphate. The protein operates within cofactor degradation; L-ascorbate degradation; D-xylulose 5-phosphate from L-ascorbate: step 4/4. In terms of biological role, catalyzes the isomerization of L-ribulose 5-phosphate to D-xylulose 5-phosphate. Is involved in the anaerobic L-ascorbate utilization. The sequence is that of L-ribulose-5-phosphate 4-epimerase UlaF from Escherichia fergusonii (strain ATCC 35469 / DSM 13698 / CCUG 18766 / IAM 14443 / JCM 21226 / LMG 7866 / NBRC 102419 / NCTC 12128 / CDC 0568-73).